Here is a 164-residue protein sequence, read N- to C-terminus: 2-C-methyl-D-erythritol 2,4-cyclodiphosphate synthase (164 aa).

A divalent metal cation is bound by residues Asp-8 and His-10. 4-CDP-2-C-methyl-D-erythritol 2-phosphate is bound by residues 8–10 and 34–35; these read DVH and HS. A divalent metal cation is bound at residue His-42. 4-CDP-2-C-methyl-D-erythritol 2-phosphate-binding positions include 56–58, 132–135, Phe-139, and Lys-142; these read DIG and TTEE.

It belongs to the IspF family. In terms of assembly, homotrimer. A divalent metal cation serves as cofactor.

It catalyses the reaction 4-CDP-2-C-methyl-D-erythritol 2-phosphate = 2-C-methyl-D-erythritol 2,4-cyclic diphosphate + CMP. It functions in the pathway isoprenoid biosynthesis; isopentenyl diphosphate biosynthesis via DXP pathway; isopentenyl diphosphate from 1-deoxy-D-xylulose 5-phosphate: step 4/6. Involved in the biosynthesis of isopentenyl diphosphate (IPP) and dimethylallyl diphosphate (DMAPP), two major building blocks of isoprenoid compounds. Catalyzes the conversion of 4-diphosphocytidyl-2-C-methyl-D-erythritol 2-phosphate (CDP-ME2P) to 2-C-methyl-D-erythritol 2,4-cyclodiphosphate (ME-CPP) with a corresponding release of cytidine 5-monophosphate (CMP). In Clostridium kluyveri (strain NBRC 12016), this protein is 2-C-methyl-D-erythritol 2,4-cyclodiphosphate synthase.